We begin with the raw amino-acid sequence, 1386 residues long: YLP motif-containing protein 1 (1386 aa).

2 disordered regions span residues 1–336 and 517–1068; these read MYPN…EDAR and TSIP…PPGR. Residues 14–27 are compositionally biased toward pro residues; sequence YPPPPVPPPPPPVA. Composition is skewed to low complexity over residues 31 to 50 and 59 to 80; these read ASPGPGYSSSTAPAAPSSSG and LAQLQQLQQMHQKQMQCVLQPH. Pro residues-rich tracts occupy residues 81 to 93, 102 to 114, 148 to 158, 166 to 176, and 184 to 203; these read HLPPPPLPPPPVM, QPPPPPMPPPPGP, PESPPVPPGSY, MPPPQPPPSYY, and YLPPAQPGPSKPQLPPPPSI. Over residues 237-259 the composition is skewed to polar residues; sequence STMTPQEQQQYWYRQHLLSLQQR. Residues 260–270 are compositionally biased toward basic residues; that stretch reads TKVHLPGHKKG. Residues 276–285 are compositionally biased toward basic and acidic residues; that stretch reads DVPEPIKEEA. The span at 302–317 shows a compositional bias: pro residues; that stretch reads PPLPPPNEEAPPPLSP. Acidic residues predominate over residues 320–333; it reads PQSEDSEDSEDSEE. 3 stretches are compositionally biased toward pro residues: residues 517–558, 566–603, and 641–650; these read TSIP…PPPA, PVLPPPALPGGPPILPLPPLSSATPPPGIPPPGAPQGM, and PPSPYHPPPQ. Positions 651-667 are enriched in polar residues; it reads SEQVNSKPLNKVFSSEQ. Lys-683 carries the post-translational modification N6-methyllysine. Positions 706 to 722 are enriched in basic and acidic residues; that stretch reads RGPREQKEQLQKLKDFG. Residues 746–761 show a composition bias toward pro residues; the sequence is MYPPPGSYRPPPPMGK. The span at 762–779 shows a compositional bias: low complexity; sequence PPGSIVRPSAPPARSSIP. 2 stretches are compositionally biased toward pro residues: residues 781 to 803 and 848 to 878; these read TRPPVPIPPPPPPPPPPPPPPPV and PVLPPPPVHSSIPPPGPMPMGMPPMSKPPPV. A Glycyl lysine isopeptide (Lys-Gly) (interchain with G-Cter in SUMO2) cross-link involves residue Lys-894. Basic and acidic residues-rich tracts occupy residues 904-938, 945-1014, 1023-1033, and 1049-1068; these read ITLRPDPLPERSTFDADHAGQRDRYDRDRDREPYF, TDHR…DRPP, GERRTYPEERM, and RVEKKPESKNVDDILKPPGR. Lys-951 participates in a covalent cross-link: Glycyl lysine isopeptide (Lys-Gly) (interchain with G-Cter in SUMO2). An involved in interaction with PPP1CA region spans residues 1336-1343; the sequence is KKRVRWAD.

Interacts with PPP1CA and NCOA5. Forms a complex with ILF2, ILF3, KHDRBS1, RBMX, NCOA5 and PPP1CA.

Its subcellular location is the nucleus. The protein localises to the nucleus speckle. Its function is as follows. Plays a role in the reduction of telomerase activity during differentiation of embryonic stem cells by binding to the core promoter of TERT and controlling its down-regulation. The sequence is that of YLP motif-containing protein 1 (Ylpm1) from Mus musculus (Mouse).